Consider the following 478-residue polypeptide: MATALVSAHSLAPLNLKKEGLRVVREDHYSTWEQGFKLQGNSKGLGQEPLCKQFRQLRYEETTGPREALSRLRELCQQWLQPETHTKEQILELLVLEQFLIILPKELQARVQEHHPESREDVVVVLEDLQLDLGETGQQDPDQPKKQKILVEEMAPLKGVQEQQVRHECEVTKPEKEKGEETRIENGKLIVVTDSCGRVESSGKISEPMEAHNEGSNLERHQAKPKEKIEYKCSEREQRFIQHLDLIEHASTHTGKKLCESDVCQSSSLTGHKKVLSREKGHQCHECGKAFQRSSHLVRHQKIHLGEKPYQCNECGKVFSQNAGLLEHLRIHTGEKPYLCIHCGKNFRRSSHLNRHQRIHSQEEPCECKECGKTFSQALLLTHHQRIHSHSKSHQCNECGKAFSLTSDLIRHHRIHTGEKPFKCNICQKAFRLNSHLAQHVRIHNEEKPYQCSECGEAFRQRSGLFQHQRYHHKDKLA.

Residue lysine 17 forms a Glycyl lysine isopeptide (Lys-Gly) (interchain with G-Cter in SUMO2) linkage. Residues 51–133 (CKQFRQLRYE…VVLEDLQLDL (83 aa)) enclose the SCAN box domain. Disordered regions lie at residues 159 to 181 (GVQE…KGEE) and 200 to 226 (ESSG…AKPK). 2 stretches are compositionally biased toward basic and acidic residues: residues 164 to 181 (QVRH…KGEE) and 207 to 226 (EPME…AKPK). Residues 231-253 (YKCSEREQRFIQHLDLIEHASTH) form a C2H2-type 1; degenerate zinc finger. 7 consecutive C2H2-type zinc fingers follow at residues 282–304 (HQCH…QKIH), 310–332 (YQCN…LRIH), 338–360 (YLCI…QRIH), 366–388 (CECK…QRIH), 394–416 (HQCN…HRIH), 422–444 (FKCN…VRIH), and 450–472 (YQCS…QRYH).

The protein resides in the nucleus. Its function is as follows. May be involved in transcriptional regulation. This Homo sapiens (Human) protein is Zinc finger and SCAN domain-containing protein 26 (ZSCAN26).